A 281-amino-acid chain; its full sequence is NADPH-dependent 7-cyano-7-deazaguanine reductase (281 aa).

Position 88-90 (88-90 (VES)) interacts with substrate. 90 to 91 (SK) contributes to the NADPH binding site. Cys-189 (thioimide intermediate) is an active-site residue. Asp-196 serves as the catalytic Proton donor. 228-229 (HE) serves as a coordination point for substrate. NADPH is bound at residue 257–258 (RG).

It belongs to the GTP cyclohydrolase I family. QueF type 2 subfamily. Homodimer.

Its subcellular location is the cytoplasm. The catalysed reaction is 7-aminomethyl-7-carbaguanine + 2 NADP(+) = 7-cyano-7-deazaguanine + 2 NADPH + 3 H(+). The protein operates within tRNA modification; tRNA-queuosine biosynthesis. Its function is as follows. Catalyzes the NADPH-dependent reduction of 7-cyano-7-deazaguanine (preQ0) to 7-aminomethyl-7-deazaguanine (preQ1). The chain is NADPH-dependent 7-cyano-7-deazaguanine reductase from Klebsiella pneumoniae subsp. pneumoniae (strain ATCC 700721 / MGH 78578).